The sequence spans 495 residues: Amorpha-4,11-diene 12-monooxygenase (495 aa).

Residues 1 to 6 (MKSILK) are Cytoplasmic-facing. Residues 7–29 (AMALSLTTSIALATILLFVYKFA) form a helical; Signal-anchor for type II membrane protein membrane-spanning segment. Topologically, residues 30-495 (TRSKSTKKSL…KTELLLVPSF (466 aa)) are lumenal. N-linked (GlcNAc...) asparagine glycosylation is found at Asn-176, Asn-261, Asn-267, Asn-386, and Asn-417. Residue Cys-439 coordinates heme.

Belongs to the cytochrome P450 family. Requires heme as cofactor. In terms of tissue distribution, highly expressed both in apical and sub-apical cells of glandular secretory trichomes. Detected in flower buds, leaves and roots. Also present in non-glandular trichome cells.

The protein localises to the endoplasmic reticulum membrane. The enzyme catalyses (+)-amorpha-4,11-diene + 3 reduced [NADPH--hemoprotein reductase] + 3 O2 = (+)-artemisinate + 3 oxidized [NADPH--hemoprotein reductase] + 4 H2O + 4 H(+). It participates in sesquiterpene biosynthesis. Its function is as follows. Involved in the biosynthesis of the antimalarial endoperoxide artemisinin. Catalyzes three consecutive oxidations of amorpha-4,11-diene to produce artemisinic acid, with artemisinic alcohol and artemisinic aldehyde as intermediates products, but is unable to oxidize germacrene A. No activity with limonene, alpha-pinene, beta-pinene, pinocarveol, (-)-alloisolongifolene, caryophyllene, (-)-alpha-gurjunene, (+)-gamma-gurjunene, (+)-ledene, (+)-beta-selinene and (+)-valencene as substrates. The polypeptide is Amorpha-4,11-diene 12-monooxygenase (Artemisia annua (Sweet wormwood)).